A 377-amino-acid chain; its full sequence is Transcription factor EC (377 aa).

The bHLH domain maps to 169 to 222; the sequence is QKKDNHNLIERRRRYNINYRIKELGTLIPKSNDPDMRWNKGTILKASVEYIKWL. A disordered region spans residues 349-377; it reads DPLLSSTSPAASKESSRRSSFSTDDGDDL. The segment covering 353–370 has biased composition (low complexity); the sequence is SSTSPAASKESSRRSSFS.

This sequence belongs to the MiT/TFE family.

The protein resides in the nucleus. Its function is as follows. Transcriptional regulator that acts as a repressor or an activator. Binds DNA. In Gallus gallus (Chicken), this protein is Transcription factor EC (TFEC).